Consider the following 79-residue polypeptide: MVTIRLARGGSKKRPFYHLTVTDSRNSRDGRFIERVGFFNPIARGQEERLRVNRERVDFWLGQGAQASERVAQLLKAAQ.

This sequence belongs to the bacterial ribosomal protein bS16 family.

In Marinobacter nauticus (strain ATCC 700491 / DSM 11845 / VT8) (Marinobacter aquaeolei), this protein is Small ribosomal subunit protein bS16.